The sequence spans 463 residues: tRNA-2-methylthio-N(6)-dimethylallyladenosine synthase (463 aa).

One can recognise an MTTase N-terminal domain in the interval 19-135 (GSYWITTFGC…LESLLNQVDS (117 aa)). Residues Cys-28, Cys-64, Cys-98, Cys-170, Cys-174, and Cys-177 each contribute to the [4Fe-4S] cluster site. One can recognise a Radical SAM core domain in the interval 156–393 (RDSSFCGWVN…NSLVENIAKE (238 aa)). Residues 396–463 (QRYKNTSQEI…RPFSLTAKLL (68 aa)) form the TRAM domain.

It belongs to the methylthiotransferase family. MiaB subfamily. As to quaternary structure, monomer. [4Fe-4S] cluster is required as a cofactor.

The protein resides in the cytoplasm. It catalyses the reaction N(6)-dimethylallyladenosine(37) in tRNA + (sulfur carrier)-SH + AH2 + 2 S-adenosyl-L-methionine = 2-methylsulfanyl-N(6)-dimethylallyladenosine(37) in tRNA + (sulfur carrier)-H + 5'-deoxyadenosine + L-methionine + A + S-adenosyl-L-homocysteine + 2 H(+). Catalyzes the methylthiolation of N6-(dimethylallyl)adenosine (i(6)A), leading to the formation of 2-methylthio-N6-(dimethylallyl)adenosine (ms(2)i(6)A) at position 37 in tRNAs that read codons beginning with uridine. This Prochlorococcus marinus (strain NATL1A) protein is tRNA-2-methylthio-N(6)-dimethylallyladenosine synthase.